The sequence spans 390 residues: Anhydro-N-acetylmuramic acid kinase (390 aa).

9–16 (GTSLDGID) is an ATP binding site.

It belongs to the anhydro-N-acetylmuramic acid kinase family.

It carries out the reaction 1,6-anhydro-N-acetyl-beta-muramate + ATP + H2O = N-acetyl-D-muramate 6-phosphate + ADP + H(+). It functions in the pathway amino-sugar metabolism; 1,6-anhydro-N-acetylmuramate degradation. It participates in cell wall biogenesis; peptidoglycan recycling. In terms of biological role, catalyzes the specific phosphorylation of 1,6-anhydro-N-acetylmuramic acid (anhMurNAc) with the simultaneous cleavage of the 1,6-anhydro ring, generating MurNAc-6-P. Is required for the utilization of anhMurNAc either imported from the medium or derived from its own cell wall murein, and thus plays a role in cell wall recycling. The polypeptide is Anhydro-N-acetylmuramic acid kinase (Bacillus cereus (strain ATCC 14579 / DSM 31 / CCUG 7414 / JCM 2152 / NBRC 15305 / NCIMB 9373 / NCTC 2599 / NRRL B-3711)).